A 57-amino-acid chain; its full sequence is Potassium channel toxin alpha-KTx 8.5 (57 aa).

Residues 1 to 28 (MSRLYAIILIALVLNVIMTIMPDSKVEA) form the signal peptide. 3 disulfides stabilise this stretch: Cys31–Cys47, Cys34–Cys52, and Cys38–Cys54.

Belongs to the short scorpion toxin superfamily. Potassium channel inhibitor family. Alpha-KTx 08 subfamily. In terms of tissue distribution, expressed by the venom gland.

It localises to the secreted. Its function is as follows. Selectively inhibits voltage-gated potassium channels Kv1.2/KCNA2 (IC(50)=183 nM). This is Potassium channel toxin alpha-KTx 8.5 from Odontobuthus doriae (Yellow Iranian scorpion).